The chain runs to 448 residues: MQINSSWQERFLADPPREKDHRPPFRRDRGRILHSAAFRCLQAKTQIHAIGENDFYRTRLTHSLEVAQIGSSIVAQMKLIDSFIYLAQQLKEDRADLQKQLKLILPSNDLIESLCFAHDIGHPPFGHGGEVALNYMMRHHGGFEGNAQTFRLLTKLEPYTPNAGMNLTRRTLLGVVKYPTILDRSSPQYHQGVIVDNVDSKYVKISAWKPGKGIFRDDLKMFEWLLEPLSENDRTLFGQYKKERTRPDEVLKTRYKSLDCSIMELADDIAYAVHDLEDAIVVGVVTFQQWQSAVEKLAECRSEWIVQTISSLSQKLFSELHYERKNAIGALVNYFITHVRWKINNGFSEPLLRYNAELPDEVIEVLNIFKRFVWEYVIKHVDTQRVEYKGQRMLTEMFQIFDSDPLRLLPRNTAMRWQKATETDRKRIICDYIAGMSDAYALRVYQQL.

A disordered region spans residues 1–26; it reads MQINSSWQERFLADPPREKDHRPPFR. The span at 11 to 26 shows a compositional bias: basic and acidic residues; that stretch reads FLADPPREKDHRPPFR. Residues 59 to 272 form the HD domain; the sequence is RLTHSLEVAQ…MELADDIAYA (214 aa).

This sequence belongs to the dGTPase family. Type 2 subfamily.

The sequence is that of Deoxyguanosinetriphosphate triphosphohydrolase-like protein from Histophilus somni (strain 129Pt) (Haemophilus somnus).